The sequence spans 505 residues: Histidine--tRNA ligase, mitochondrial (505 aa).

A mitochondrion-targeting transit peptide spans 1 to 31; it reads MPHLGPLRRRAWAALLGQLLRPPSTVCTRGC. Ser66 carries the phosphoserine modification. L-histidine contacts are provided by residues 130-132, Arg157, Gln173, Asp177, Arg326, and 330-331; these read DLT and YY. Position 443 is an N6-acetyllysine (Lys443).

The protein belongs to the class-II aminoacyl-tRNA synthetase family. As to quaternary structure, homodimer.

The protein localises to the mitochondrion. The enzyme catalyses tRNA(His) + L-histidine + ATP = L-histidyl-tRNA(His) + AMP + diphosphate + H(+). Functionally, mitochondrial aminoacyl-tRNA synthetase that catalyzes the ATP-dependent ligation of histidine to the 3'-end of its cognate tRNA, via the formation of an aminoacyl-adenylate intermediate (His-AMP). This is Histidine--tRNA ligase, mitochondrial (Hars2) from Mus musculus (Mouse).